The following is a 464-amino-acid chain: MNALVALVGRPNVGKSTLFNRLTRSRDALVVDQPGVTRDRKYGLAHYGEQSFFVVDTGGVMEQESGIGRLMRAQAQLAIEEADVIFFLVDGREGLSSLDEEIAAWLRCAQKPLKLVINKAEGRDGDLVASEFYRLGLGEPIIISAQQGQGVGRLLEALLTLLPVLEREESEIQAKGLQFAVIGRPNVGKSTLVNRILGEERVLSSEIPGTTRDSISIPFRHHGKDYTLVDTAGIRRRSRILDKVEKFSVIQSLQSIAIAQVVILVIDAHDSVVEQDLHLAGVILESGKGVVIAVNKWDGLPLEQRQRVKTDLDRRLPFLVFARIHFISALHGSGVGDLFPSIDEAYQSANSHLPTGELNRALLAAVEKYPPPVVKGRRIKLRYAHQGGQNPPKIIIHGNQAEAVSANYRRYLINYFRNAFGLMGTPIALEFRTVKNPFKGRANILTQRQQQKRKRLVRFRKGRD.

2 consecutive EngA-type G domains span residues 3 to 166 (ALVA…PVLE) and 177 to 350 (LQFA…QSAN). GTP contacts are provided by residues 9-16 (GRPNVGKS), 56-60 (DTGGV), 118-121 (NKAE), 183-190 (GRPNVGKS), 230-234 (DTAGI), and 295-298 (NKWD). Positions 351–435 (SHLPTGELNR…PIALEFRTVK (85 aa)) constitute a KH-like domain.

The protein belongs to the TRAFAC class TrmE-Era-EngA-EngB-Septin-like GTPase superfamily. EngA (Der) GTPase family. As to quaternary structure, associates with the 50S ribosomal subunit.

Functionally, GTPase that plays an essential role in the late steps of ribosome biogenesis. The protein is GTPase Der of Nitrosococcus oceani (strain ATCC 19707 / BCRC 17464 / JCM 30415 / NCIMB 11848 / C-107).